We begin with the raw amino-acid sequence, 363 residues long: 1-aminocyclopropane-1-carboxylate oxidase homolog (363 aa).

Positions 212-312 (FHLFCSCNYY…MSITCFFGES (101 aa)) constitute a Fe2OG dioxygenase domain. 3 residues coordinate Fe cation: histidine 236, aspartate 238, and histidine 292.

The protein belongs to the iron/ascorbate-dependent oxidoreductase family.

In Solanum lycopersicum (Tomato), this protein is 1-aminocyclopropane-1-carboxylate oxidase homolog (ACO3).